The primary structure comprises 349 residues: Fructose-1,6-bisphosphatase class 1 (349 aa).

Positions 113, 135, 137, and 138 each coordinate Mg(2+). Substrate is bound by residues 138 to 141, N230, Y258, and K288; that span reads DGSS. E294 is a Mg(2+) binding site.

It belongs to the FBPase class 1 family. In terms of assembly, homotetramer. Mg(2+) is required as a cofactor.

It localises to the cytoplasm. The enzyme catalyses beta-D-fructose 1,6-bisphosphate + H2O = beta-D-fructose 6-phosphate + phosphate. Its pathway is carbohydrate biosynthesis; Calvin cycle. This chain is Fructose-1,6-bisphosphatase class 1, found in Nostoc punctiforme (strain ATCC 29133 / PCC 73102).